The primary structure comprises 536 residues: T-complex protein 1 subunit delta (536 aa).

Residues 1–15 show a composition bias toward polar residues; it reads MPEGKATSSASNTGK. Residues 1-26 are disordered; sequence MPEGKATSSASNTGKNKGGAYQDRDK. Glycine 50 lines the ADP pocket. Glycine 50 is a binding site for ATP. Aspartate 101 lines the Mg(2+) pocket. ADP is bound by residues glycine 102, threonine 103, threonine 104, serine 105, serine 170, lysine 171, glycine 422, and glutamine 507. Residues glycine 102 and threonine 103 each coordinate ATP. An ATP-binding site is contributed by lysine 171.

This sequence belongs to the TCP-1 chaperonin family. Component of the chaperonin-containing T-complex (TRiC), a hexadecamer composed of two identical back-to-back stacked rings enclosing a protein folding chamber. Each ring is made up of eight different subunits: TCP1/CCT1, CCT2, CCT3, CCT4, CCT5, CCT6A/CCT6, CCT7, CCT8.

The protein resides in the cytoplasm. The catalysed reaction is ATP + H2O = ADP + phosphate + H(+). Functionally, component of the chaperonin-containing T-complex (TRiC), a molecular chaperone complex that assists the folding of actin, tubulin and other proteins upon ATP hydrolysis. This Takifugu rubripes (Japanese pufferfish) protein is T-complex protein 1 subunit delta (cct4).